The sequence spans 532 residues: Cytochrome c oxidase subunit 1 (532 aa).

Helical transmembrane passes span 1–21 (MWDY…AYAA), 27–47 (LPYM…LIWV), and 69–89 (GVIA…VIAF). Position 114 (His-114) interacts with heme b. Helical transmembrane passes span 115–135 (TSAV…FYVV), 143–163 (LFGG…IIVT), 185–205 (LDIL…GTIF), 212–232 (IYVA…LHIV), 263–283 (GHNA…YYFV), 296–316 (LSIV…PHHL), 328–348 (LGMV…INGL), and 366–386 (MMVV…MMSI). Residues His-264, His-314, and His-315 each coordinate Cu cation. Heme b contacts are provided by His-402 and His-404. Transmembrane regions (helical) follow at residues 403-423 (VHSG…YFLT), 442-462 (FWLA…TGIM), and 496-516 (VGGV…WATV).

Belongs to the heme-copper respiratory oxidase family. Requires Cu(2+) as cofactor. It depends on heme b as a cofactor.

Its subcellular location is the cell membrane. The enzyme catalyses 4 Fe(II)-[cytochrome c] + O2 + 8 H(+)(in) = 4 Fe(III)-[cytochrome c] + 2 H2O + 4 H(+)(out). Its pathway is energy metabolism; oxidative phosphorylation. Cytochrome c oxidase is the component of the respiratory chain that catalyzes the reduction of oxygen to water. Subunits 1-3 form the functional core of the enzyme complex. Co I is the catalytic subunit of the enzyme. Electrons originating in cytochrome c are transferred via the copper A center of subunit 2 and heme a of subunit 1 to the bimetallic center formed by heme a3 and copper B. This cytochrome c oxidase shows proton pump activity across the membrane in addition to the electron transfer. The polypeptide is Cytochrome c oxidase subunit 1 (ctaD) (Rhodobacter capsulatus (Rhodopseudomonas capsulata)).